The chain runs to 270 residues: tRNA pseudouridine synthase A (270 aa).

Aspartate 51 (nucleophile) is an active-site residue. Tyrosine 109 is a substrate binding site.

This sequence belongs to the tRNA pseudouridine synthase TruA family. Homodimer.

It catalyses the reaction uridine(38/39/40) in tRNA = pseudouridine(38/39/40) in tRNA. Its function is as follows. Formation of pseudouridine at positions 38, 39 and 40 in the anticodon stem and loop of transfer RNAs. This chain is tRNA pseudouridine synthase A, found in Burkholderia orbicola (strain MC0-3).